Reading from the N-terminus, the 947-residue chain is Bifunctional glutamine synthetase adenylyltransferase/adenylyl-removing enzyme (947 aa).

An adenylyl removase region spans residues 1–440; that stretch reads MTPLSSPLRQ…VFNELIGDDE (440 aa). Residues 450–947 form an adenylyl transferase region; the sequence is SEPWREVWQD…ASWRKWLVAV (498 aa).

This sequence belongs to the GlnE family. Mg(2+) serves as cofactor.

It carries out the reaction [glutamine synthetase]-O(4)-(5'-adenylyl)-L-tyrosine + phosphate = [glutamine synthetase]-L-tyrosine + ADP. The enzyme catalyses [glutamine synthetase]-L-tyrosine + ATP = [glutamine synthetase]-O(4)-(5'-adenylyl)-L-tyrosine + diphosphate. Its function is as follows. Involved in the regulation of glutamine synthetase GlnA, a key enzyme in the process to assimilate ammonia. When cellular nitrogen levels are high, the C-terminal adenylyl transferase (AT) inactivates GlnA by covalent transfer of an adenylyl group from ATP to specific tyrosine residue of GlnA, thus reducing its activity. Conversely, when nitrogen levels are low, the N-terminal adenylyl removase (AR) activates GlnA by removing the adenylyl group by phosphorolysis, increasing its activity. The regulatory region of GlnE binds the signal transduction protein PII (GlnB) which indicates the nitrogen status of the cell. The sequence is that of Bifunctional glutamine synthetase adenylyltransferase/adenylyl-removing enzyme from Salmonella arizonae (strain ATCC BAA-731 / CDC346-86 / RSK2980).